Reading from the N-terminus, the 572-residue chain is MLRSSVVRSRATLRPLLRRAYSSHKELKFGVEGRASLLKGVETLAEAVAATLGPKGRNVLIEQPFGPPKITKDGVTVAKSIVLKDKFENMGAKLLQEVASKTNEAAGDGTTSATVLGRAIFTESVKNVAAGCNPMDLRRGSQVAVEKVIEFLSANKKEITTSEEIAQVATISANGDSHVGKLLASAMEKVGKEGVITIREGRTLEDELEVTEGMRFDRGFISPYFITDPKSSKVEFEKPLLLLSEKKISSIQDILPALEISNQSRRPLLIIAEDVDGEALAACILNKLRGQVKVCAVKAPGFGDNRKNTIGDIAVLTGGTVFTEELDLKPEQCTIENLGSCDSITVTKEDTVILNGSGPKEAIQERIEQIKGSIDITTTNSYEKEKLQERLAKLSGGVAVIRVGGASEVEVGEKKDRYDDALNATRAAVEEGILPGGGTALVKASRVLDEVVVDNFDQKLGVDIIRKAITRPAKQIIENAGEEGSVIIGKLIDEYGDDFAKGYDASKSEYTDMLATGIIDPFKVVRSGLVDASGVASLLATTEVAIVDAPEPPAAAGAGGMPGGMPGMPGMM.

Residues 1-25 (MLRSSVVRSRATLRPLLRRAYSSHK) constitute a mitochondrion transit peptide. At Thr-102 the chain carries Phosphothreonine. The residue at position 485 (Ser-485) is a Phosphoserine.

Belongs to the chaperonin (HSP60) family.

The protein resides in the mitochondrion matrix. May participate in assembly and/or disassembly of proteins imported into the mitochondrion. HSP60 are ATPases and have affinity for unfolded proteins. This is Heat shock protein 60, mitochondrial (HSP60) from Saccharomyces cerevisiae (strain ATCC 204508 / S288c) (Baker's yeast).